A 284-amino-acid polypeptide reads, in one-letter code: D-tagatose-1,6-bisphosphate aldolase subunit GatY (284 aa).

The active-site Proton donor is the aspartate 82. Residues histidine 83 and histidine 180 each coordinate Zn(2+). Glycine 181 is a dihydroxyacetone phosphate binding site. Residue histidine 208 coordinates Zn(2+). Dihydroxyacetone phosphate-binding positions include 209–211 (GAS) and 230–233 (NVAT).

The protein belongs to the class II fructose-bisphosphate aldolase family. TagBP aldolase GatY subfamily. As to quaternary structure, forms a complex with GatZ. The cofactor is Zn(2+).

It catalyses the reaction D-tagatofuranose 1,6-bisphosphate = D-glyceraldehyde 3-phosphate + dihydroxyacetone phosphate. It functions in the pathway carbohydrate metabolism; D-tagatose 6-phosphate degradation; D-glyceraldehyde 3-phosphate and glycerone phosphate from D-tagatose 6-phosphate: step 2/2. In terms of biological role, catalytic subunit of the tagatose-1,6-bisphosphate aldolase GatYZ, which catalyzes the reversible aldol condensation of dihydroxyacetone phosphate (DHAP or glycerone-phosphate) with glyceraldehyde 3-phosphate (G3P) to produce tagatose 1,6-bisphosphate (TBP). Requires GatZ subunit for full activity and stability. Is involved in the catabolism of galactitol. The polypeptide is D-tagatose-1,6-bisphosphate aldolase subunit GatY (Klebsiella pneumoniae subsp. pneumoniae (strain ATCC 700721 / MGH 78578)).